Reading from the N-terminus, the 243-residue chain is Ribosomal RNA small subunit methyltransferase G (243 aa).

S-adenosyl-L-methionine contacts are provided by residues Gly82, Phe87, 133-134 (AE), and Arg152.

This sequence belongs to the methyltransferase superfamily. RNA methyltransferase RsmG family.

Its subcellular location is the cytoplasm. In terms of biological role, specifically methylates the N7 position of a guanine in 16S rRNA. The protein is Ribosomal RNA small subunit methyltransferase G of Clostridium novyi (strain NT).